A 1098-amino-acid chain; its full sequence is Mediator of RNA polymerase II transcription subunit 5 (1098 aa).

The interval 1019-1041 is disordered; it reads PDDVQKSADMKPDTGIKEDDSEK. The span at 1021 to 1041 shows a compositional bias: basic and acidic residues; sequence DVQKSADMKPDTGIKEDDSEK.

The protein belongs to the Mediator complex subunit 5 family. As to quaternary structure, component of the Mediator complex.

It is found in the nucleus. Functionally, component of the Mediator complex, a coactivator involved in the regulated transcription of nearly all RNA polymerase II-dependent genes. Mediator functions as a bridge to convey information from gene-specific regulatory proteins to the basal RNA polymerase II transcription machinery. Mediator is recruited to promoters by direct interactions with regulatory proteins and serves as a scaffold for the assembly of a functional preinitiation complex with RNA polymerase II and the general transcription factors. The chain is Mediator of RNA polymerase II transcription subunit 5 (NUT1) from Eremothecium gossypii (strain ATCC 10895 / CBS 109.51 / FGSC 9923 / NRRL Y-1056) (Yeast).